Consider the following 666-residue polypeptide: Endogenous retrovirus group K member 24 Gag polyprotein (666 aa).

Gly2 is lipidated: N-myristoyl glycine. Positions 165 to 264 (GKGPELVGPS…APPSRQGSEL (100 aa)) are disordered. A compositionally biased stretch (pro residues) spans 232–247 (GMPPAPQGRAPYPQPP). CCHC-type zinc fingers lie at residues 544–561 (GKCY…NCPV) and 580–597 (DLCP…QCRS). The segment at 598-641 (KFDKNGQPLSGNEQRGQPQAPQQTGAFPIQPFVPQGFQGQQPPL) is disordered. Residues 604–622 (QPLSGNEQRGQPQAPQQTG) are compositionally biased toward polar residues. The segment covering 624–640 (FPIQPFVPQGFQGQQPP) has biased composition (low complexity).

This sequence belongs to the beta type-B retroviral Gag protein family. HERV class-II K(HML-2) gag subfamily. Myristoylation is essential for retroviral assembly. Alteration of the glycine residue leads to a block in the budding of particles and an accumulation of Gag inside the cell. In terms of processing, specific enzymatic cleavages may yield mature proteins.

Its subcellular location is the cell membrane. The products of the Gag polyproteins of infectious retroviruses perform highly complex orchestrated tasks during the assembly, budding, maturation, and infection stages of the viral replication cycle. During viral assembly, the proteins form membrane associations and self-associations that ultimately result in budding of an immature virion from the infected cell. Gag precursors also function during viral assembly to selectively bind and package two plus strands of genomic RNA. Endogenous Gag proteins may have kept, lost or modified their original function during evolution. This chain is Endogenous retrovirus group K member 24 Gag polyprotein (ERVK-24), found in Homo sapiens (Human).